A 325-amino-acid polypeptide reads, in one-letter code: Transaldolase (325 aa).

Lysine 125 serves as the catalytic Schiff-base intermediate with substrate.

Belongs to the transaldolase family. Type 2 subfamily.

Its subcellular location is the cytoplasm. The catalysed reaction is D-sedoheptulose 7-phosphate + D-glyceraldehyde 3-phosphate = D-erythrose 4-phosphate + beta-D-fructose 6-phosphate. It functions in the pathway carbohydrate degradation; pentose phosphate pathway; D-glyceraldehyde 3-phosphate and beta-D-fructose 6-phosphate from D-ribose 5-phosphate and D-xylulose 5-phosphate (non-oxidative stage): step 2/3. Its function is as follows. Transaldolase is important for the balance of metabolites in the pentose-phosphate pathway. In Campylobacter jejuni subsp. jejuni serotype O:23/36 (strain 81-176), this protein is Transaldolase.